A 192-amino-acid polypeptide reads, in one-letter code: Ion-translocating oxidoreductase complex subunit A (192 aa).

6 helical membrane passes run 5–25 (LLLLISTVLVNNFVLVKFLGL), 39–59 (IGMSMATTFVLTLASILSYLV), 65–85 (LPFDLGYLRTMSFILVIAVVV), 102–122 (ALGIYLPLITTNCAVLGVALL), 134–154 (AIYGFGAAVGFSLVLILFSAM), and 171–191 (AIAMITAGLMSLAFMGFTGLV).

This sequence belongs to the NqrDE/RnfAE family. In terms of assembly, the complex is composed of six subunits: RnfA, RnfB, RnfC, RnfD, RnfE and RnfG.

Its subcellular location is the cell inner membrane. In terms of biological role, part of a membrane-bound complex that couples electron transfer with translocation of ions across the membrane. This is Ion-translocating oxidoreductase complex subunit A from Shewanella sp. (strain MR-4).